A 300-amino-acid polypeptide reads, in one-letter code: Spermine synthase SPE4 (300 aa).

Ser5 is subject to Phosphoserine. Residues 12 to 255 (DGWFREINDK…GQLGLIVCSN (244 aa)) enclose the PABS domain. S-adenosyl 3-(methylsulfanyl)propylamine is bound by residues Gln44, Asp99, Glu119, and 151 to 152 (DG). The active-site Proton acceptor is Asp174. Asp177 lines the spermidine pocket.

Belongs to the spermidine/spermine synthase family.

It carries out the reaction S-adenosyl 3-(methylsulfanyl)propylamine + spermidine = spermine + S-methyl-5'-thioadenosine + H(+). It participates in amine and polyamine biosynthesis; spermine biosynthesis; spermine from spermidine: step 1/1. This chain is Spermine synthase SPE4 (SPE4), found in Saccharomyces cerevisiae (strain ATCC 204508 / S288c) (Baker's yeast).